The sequence spans 421 residues: 3-isopropylmalate dehydratase large subunit (421 aa).

[4Fe-4S] cluster-binding residues include Cys300, Cys360, and Cys363.

It belongs to the aconitase/IPM isomerase family. LeuC type 2 subfamily. Heterodimer of LeuC and LeuD. The cofactor is [4Fe-4S] cluster.

It carries out the reaction (2R,3S)-3-isopropylmalate = (2S)-2-isopropylmalate. The protein operates within amino-acid biosynthesis; L-leucine biosynthesis; L-leucine from 3-methyl-2-oxobutanoate: step 2/4. Functionally, catalyzes the isomerization between 2-isopropylmalate and 3-isopropylmalate, via the formation of 2-isopropylmaleate. This is 3-isopropylmalate dehydratase large subunit from Moorella thermoacetica (strain ATCC 39073 / JCM 9320).